The following is a 427-amino-acid chain: Trigger factor (427 aa).

Positions 163-248 constitute a PPIase FKBP-type domain; sequence GDTVVIDFVG…IHEVKTKEVP (86 aa).

The protein belongs to the FKBP-type PPIase family. Tig subfamily.

The protein resides in the cytoplasm. The enzyme catalyses [protein]-peptidylproline (omega=180) = [protein]-peptidylproline (omega=0). Functionally, involved in protein export. Acts as a chaperone by maintaining the newly synthesized protein in an open conformation. Functions as a peptidyl-prolyl cis-trans isomerase. The polypeptide is Trigger factor (tig) (Streptococcus pyogenes serotype M1).